The sequence spans 253 residues: REF/SRPP-like protein OsI_017815 (253 aa).

The disordered stretch occupies residues 1 to 26 (MADSGSDAPISNRPEEEVTVEKTPEM). Positions 13 to 26 (RPEEEVTVEKTPEM) are enriched in basic and acidic residues.

Belongs to the REF/SRPP family.

The chain is REF/SRPP-like protein OsI_017815 from Oryza sativa subsp. indica (Rice).